A 189-amino-acid polypeptide reads, in one-letter code: Translation initiation factor IF-3 (189 aa).

This sequence belongs to the IF-3 family. In terms of assembly, monomer.

It is found in the cytoplasm. Functionally, IF-3 binds to the 30S ribosomal subunit and shifts the equilibrium between 70S ribosomes and their 50S and 30S subunits in favor of the free subunits, thus enhancing the availability of 30S subunits on which protein synthesis initiation begins. The protein is Translation initiation factor IF-3 of Corynebacterium glutamicum (strain R).